The chain runs to 251 residues: Protein unc-119 homolog B (251 aa).

Residues 1–28 (MSGSNPKAAAAASAAGPGGLVAGKEEKK) form a disordered region. An N-acetylserine modification is found at Ser-2. Residue Lys-24 is modified to N6-acetyllysine. Tyr-142 contacts tetradecanoate.

It belongs to the PDE6D/unc-119 family. In terms of assembly, found in a complex with ARL3, RP2 and UNC119B; RP2 induces hydrolysis of GTP ARL3 in the complex, leading to the release of UNC119B. Interacts with NPHP3 (when myristoylated). Interacts with CYS1 (when myristoylated). Interacts with MACIR; interaction only takes place when UNC119B is not liganded with myristoylated proteins.

It is found in the cell projection. The protein localises to the cilium. In terms of biological role, myristoyl-binding protein that acts as a cargo adapter: specifically binds the myristoyl moiety of a subset of N-terminally myristoylated proteins and is required for their localization. Binds myristoylated NPHP3 and plays a key role in localization of NPHP3 to the primary cilium membrane. Does not bind all myristoylated proteins. Probably plays a role in trafficking proteins in photoreceptor cells. The protein is Protein unc-119 homolog B (UNC119B) of Homo sapiens (Human).